A 435-amino-acid polypeptide reads, in one-letter code: Ribosomal protein uS12 methylthiotransferase RimO (435 aa).

Residues 3–113 (HKVGFVSLGC…VVNAVHQYLP (111 aa)) form the MTTase N-terminal domain. Positions 12, 48, 77, 144, 148, and 151 each coordinate [4Fe-4S] cluster. The 238-residue stretch at 130 to 367 (LTPRHYAYLK…MQVQAEISRN (238 aa)) folds into the Radical SAM core domain. The TRAM domain occupies 370 to 435 (KNKIGSTQTV…DDYDLYASLV (66 aa)).

The protein belongs to the methylthiotransferase family. RimO subfamily. [4Fe-4S] cluster is required as a cofactor.

The protein localises to the cytoplasm. It catalyses the reaction L-aspartate(89)-[ribosomal protein uS12]-hydrogen + (sulfur carrier)-SH + AH2 + 2 S-adenosyl-L-methionine = 3-methylsulfanyl-L-aspartate(89)-[ribosomal protein uS12]-hydrogen + (sulfur carrier)-H + 5'-deoxyadenosine + L-methionine + A + S-adenosyl-L-homocysteine + 2 H(+). In terms of biological role, catalyzes the methylthiolation of an aspartic acid residue of ribosomal protein uS12. This Legionella pneumophila subsp. pneumophila (strain Philadelphia 1 / ATCC 33152 / DSM 7513) protein is Ribosomal protein uS12 methylthiotransferase RimO.